Here is a 103-residue protein sequence, read N- to C-terminus: Matrix Gla protein (103 aa).

The N-terminal stretch at 1-19 (MKSLVLLAILAALAVVTLC) is a signal peptide. Glu-21 bears the 4-carboxyglutamate mark. Ser-22, Ser-25, and Ser-28 each carry phosphoserine. In terms of domain architecture, Gla spans 51-97 (RAKVQERIRERSKPVHELNREACDDYRLCERYAMVYGYNAAYNRYFR). A 4-carboxyglutamate mark is found at Glu-56, Glu-60, Glu-67, and Glu-71. Residues Cys-73 and Cys-79 are joined by a disulfide bond. Positions 97-103 (RERRGAK) are cleaved as a propeptide — removed in mature form; probably by carboxypeptidase N.

This sequence belongs to the osteocalcin/matrix Gla protein family. Post-translationally, requires vitamin K-dependent gamma-carboxylation for its function.

The protein resides in the secreted. Functionally, associates with the organic matrix of bone and cartilage. Thought to act as an inhibitor of bone formation. This Pongo abelii (Sumatran orangutan) protein is Matrix Gla protein (MGP).